Reading from the N-terminus, the 521-residue chain is Lymphocyte activation gene 3 protein (521 aa).

The N-terminal stretch at 1–23 (MREDLLLGFLLLGLLWEAPVVSS) is a signal peptide. Residues 24-442 (GPGKELPVVW…ISGDLKGGHL (419 aa)) are Extracellular-facing. Positions 37–163 (GAPVHLPCSL…LSCSLRLRVG (127 aa)) constitute an Ig-like V-type domain. Residues 37 to 246 (GAPVHLPCSL…LTYRDGFNVS (210 aa)) are interaction with FGL1. Cys-44 and Cys-156 are disulfide-bonded. 3 consecutive Ig-like C2-type domains span residues 165–246 (ASMI…FNVS), 258–341 (PVAP…ATVT), and 345–412 (ITVT…EGQR). Asn-184 is a glycosylation site (N-linked (GlcNAc...) asparagine). A disulfide bond links Cys-185 and Cys-235. 4 N-linked (GlcNAc...) asparagine glycosylation sites follow: Asn-244, Asn-309, Asn-337, and Asn-381. A disulfide bridge connects residues Cys-276 and Cys-327. The cysteines at positions 363 and 405 are disulfide-linked. A connecting peptide region spans residues 422 to 442 (ESSSGAHSARRISGDLKGGHL). Residues 443 to 463 (VLVLILGALSLFLLVAGAFGF) form a helical membrane-spanning segment. The Cytoplasmic portion of the chain corresponds to 464–521 (HWWRKQLLLRRFSALEHGIQPFPAQRKIEELERELETEMGQEPEPEPEPQLEPEPRQL). The KIEELE motif motif lies at 490–495 (KIEELE). The interval 493-518 (ELERELETEMGQEPEPEPEPQLEPEP) is 13 X 2 AA tandem repeats of E-X. The interval 493 to 521 (ELERELETEMGQEPEPEPEPQLEPEPRQL) is disordered. Residues 500–514 (TEMGQEPEPEPEPQL) show a composition bias toward acidic residues.

Belongs to the LAG3 family. Interacts with MHC class II (MHC-II); selectively recognizes stable complexes of peptide and MHC-II. Interacts with FGL1 (via the Fibrinogen C-terminal domain). In terms of processing, proteolytically cleaved by ADAM10 and ADAM17 within the connecting peptide region, leading to release of Secreted lymphocyte activation gene 3 protein (sLAG-3). ADAM10 mediates constitutive cleavage, but cleavage increases following T-cell activation, whereas shedding by ADAM17 is induced by TCR signaling in a PRKCQ-dependent manner. Primarily expressed in activated CD4(+) and CD8(+) T-cells. Also expressed in a subset of regulatory T-cells (Tregs), such as natural CD4(+)CD25(+) Tregs. Also expressed on plasmacytoid dendritic cells (pDCs).

It localises to the cell membrane. It is found in the secreted. In terms of biological role, lymphocyte activation gene 3 protein: Inhibitory receptor on antigen activated T-cells. Delivers inhibitory signals upon binding to ligands, such as FGL1. FGL1 constitutes a major ligand of LAG3 and is responsible for LAG3 T-cell inhibitory function. Following TCR engagement, LAG3 associates with CD3-TCR in the immunological synapse and directly inhibits T-cell activation. May inhibit antigen-specific T-cell activation in synergy with PDCD1/PD-1, possibly by acting as a coreceptor for PDCD1/PD-1. Negatively regulates the proliferation, activation, effector function and homeostasis of both CD8(+) and CD4(+) T-cells. Also mediates immune tolerance: constitutively expressed on a subset of regulatory T-cells (Tregs) and contributes to their suppressive function. Also acts as a negative regulator of plasmacytoid dendritic cell (pDCs) activation. Binds MHC class II (MHC-II); the precise role of MHC-II-binding is however unclear. Functionally, may function as a ligand for MHC class II (MHC-II) on antigen-presenting cells (APC), promoting APC activation/maturation and driving Th1 immune response. The polypeptide is Lymphocyte activation gene 3 protein (Mus musculus (Mouse)).